A 544-amino-acid chain; its full sequence is Chaperonin GroEL (544 aa).

ATP contacts are provided by residues 30 to 33, K51, 87 to 91, G415, 478 to 480, and D494; these read TLGP, DGTTT, and DVA. Residues 524-544 form a disordered region; the sequence is PEKEKKPATPAGAGGMGDMEY. Gly residues predominate over residues 535–544; the sequence is GAGGMGDMEY.

Belongs to the chaperonin (HSP60) family. As to quaternary structure, forms a cylinder of 14 subunits composed of two heptameric rings stacked back-to-back. Interacts with the co-chaperonin GroES.

Its subcellular location is the cytoplasm. The enzyme catalyses ATP + H2O + a folded polypeptide = ADP + phosphate + an unfolded polypeptide.. In terms of biological role, together with its co-chaperonin GroES, plays an essential role in assisting protein folding. The GroEL-GroES system forms a nano-cage that allows encapsulation of the non-native substrate proteins and provides a physical environment optimized to promote and accelerate protein folding. The sequence is that of Chaperonin GroEL from Methylacidiphilum infernorum (isolate V4) (Methylokorus infernorum (strain V4)).